A 161-amino-acid chain; its full sequence is Succinate dehydrogenase assembly factor 2, mitochondrial (161 aa).

A mitochondrion-targeting transit peptide spans 1–31 (MSLLRVTRSSGHLSAVCRLPARSISTTSILL).

This sequence belongs to the SDHAF2 family. Interacts with the flavoprotein subunit within the SDH catalytic dimer.

The protein localises to the mitochondrion matrix. Plays an essential role in the assembly of succinate dehydrogenase (SDH), an enzyme complex (also referred to as respiratory complex II) that is a component of both the tricarboxylic acid (TCA) cycle and the mitochondrial electron transport chain, and which couples the oxidation of succinate to fumarate with the reduction of ubiquinone (coenzyme Q) to ubiquinol. Required for flavinylation (covalent attachment of FAD) of the flavoprotein subunit of the SDH catalytic dimer. The chain is Succinate dehydrogenase assembly factor 2, mitochondrial from Aedes aegypti (Yellowfever mosquito).